The sequence spans 2238 residues: Protein Ycf2 (2238 aa).

1579–1586 contributes to the ATP binding site; the sequence is GSIGTGRS.

This sequence belongs to the Ycf2 family.

Its subcellular location is the plastid. Functionally, probable ATPase of unknown function. Its presence in a non-photosynthetic plant (Epifagus virginiana) and experiments in tobacco indicate that it has an essential function which is probably not related to photosynthesis. The sequence is that of Protein Ycf2 from Cuscuta exaltata (Tall dodder).